The sequence spans 648 residues: MSLAASAGRGPGTMWSPTHVQVTVLQARGLRAKGPGGTSDAYAVIQVGKEKYATSVSERSLGAPVWREEATFELPPLLSSGTAPAAAAATLQLTVLHRALLGLDKFLGRAEVDLRELHRDQSRRKKQWYTLKSKPGKKDKERGEIEVDIQFMRNNMTASMFDLSMKDKSRNPFGKLKDKIKGKNKDNTSDTASAIVPSTTPSVDSDDESFSKDKKKKSKIKTLFSKPSLQKTPLSQSMSVLPTSKPDKVLLRPGDFQSRWGDEGDNEDESSSASEVMSQKRTSSTDHTQPNQSNFSLPKKEGLSFLGGLRSKNDSLSRSNVCINGNHVYMEQPEAKSEIRESSPSNSPSPQGFRKRHLFSSTENLAARSPKEPGEGGGMSSDRRLSDSSTKDSMKSMSLPSYRPLTTADSREGLSPANMEVATKETKDSKKQESKKSSLLSLVTGKKDVAKGSEGEPLPPVSEKEKGRKGVLVEAQLREEDLVRRPEKDAVPVASQWGSSQNPFEDAQISDLEASVESKCEPKPPVPVPRTPQTRAVKPRPHPVKPMNTTAPKITNSSLGTATIISENLINEALMKKYQPSDPAFAYAQLTHDELIQLVLKQKETISKKEFQVRELEDYIDNLLVRVMEETPNILRVPAQTGKKAGKM.

The C2 domain occupies 1 to 129 (MSLAASAGRG…DQSRRKKQWY (129 aa)). The segment covering 164 to 188 (SMKDKSRNPFGKLKDKIKGKNKDNT) has biased composition (basic and acidic residues). Disordered regions lie at residues 164-470 (SMKD…GRKG), 483-503 (VRRP…SQNP), and 516-555 (VESK…PKIT). Polar residues predominate over residues 189–201 (SDTASAIVPSTTP). Serine 205, serine 209, and serine 237 each carry phosphoserine. Polar residues-rich tracts occupy residues 227-242 (PSLQ…SVLP) and 271-296 (SSAS…SNFS). Serine 304, serine 319, serine 343, serine 345, serine 347, serine 349, serine 360, serine 361, and serine 386 each carry phosphoserine. Residues 314 to 323 (DSLSRSNVCI) are compositionally biased toward polar residues. Basic and acidic residues-rich tracts occupy residues 381–394 (SDRR…KDSM) and 422–436 (ATKE…ESKK). Position 438 is a phosphoserine (serine 438). The segment covering 445–454 (GKKDVAKGSE) has biased composition (basic and acidic residues). The 63-residue stretch at 576-638 (KKYQPSDPAF…EETPNILRVP (63 aa)) folds into the FIP-RBD domain. Positions 584–648 (AFAYAQLTHD…AQTGKKAGKM (65 aa)) are necessary for interaction with RAB4A and RAB11A, subcellular location and endosomal recycling.

As to quaternary structure, homooligomer. Interacts with RAB11A, RAB11B, RAB25, RAB4A and RAB14.

The protein localises to the recycling endosome. It localises to the cytoplasmic vesicle. Functionally, a Rab11 effector protein involved in the endosomal recycling process. Also involved in controlling membrane trafficking along the phagocytic pathway and in phagocytosis. Interaction with RAB14 may function in the process of neurite formation. The chain is Rab11 family-interacting protein 1 from Rattus norvegicus (Rat).